Consider the following 322-residue polypeptide: MRKKPLTIFSDGTLTRRENTLYFESAKGRKPLAIEGIYDIYIYGHVNITSQALHYIAQKGILIHFFNHYGYYDGTFYPRETLLSGDLIIRQAEHYLNKEKRLFLAKSFVTGGTKNMERNLKNWGIKAKLSDYLDELNDARKITEIMNVEARIRQEYYAKWDENLPEEFKIVKRTRRPPKNEMNALISFLNSRLYATIITEIYNTQLAPTISYLHEPSERRFSLSLDLSEIFKPIIADRVANRLVKKGSLKKEHFREDLNGVLLTEEGMKIVTKAYNEELQKSVKHPKIGSNVTRQRLIRLEAYKLIKHLVGVEEYKPLVAWF.

Mn(2+) contacts are provided by Glu149, His214, and Glu229.

Belongs to the CRISPR-associated endonuclease Cas1 family. In terms of assembly, homodimer, forms a heterotetramer with a Cas2 homodimer. It depends on Mg(2+) as a cofactor. Requires Mn(2+) as cofactor.

CRISPR (clustered regularly interspaced short palindromic repeat), is an adaptive immune system that provides protection against mobile genetic elements (viruses, transposable elements and conjugative plasmids). CRISPR clusters contain spacers, sequences complementary to antecedent mobile elements, and target invading nucleic acids. CRISPR clusters are transcribed and processed into CRISPR RNA (crRNA). Acts as a dsDNA endonuclease. Involved in the integration of spacer DNA into the CRISPR cassette. The protein is CRISPR-associated endonuclease Cas1 of Pyrococcus horikoshii (strain ATCC 700860 / DSM 12428 / JCM 9974 / NBRC 100139 / OT-3).